Here is a 623-residue protein sequence, read N- to C-terminus: MQDNETDGRDVPTGHAVIQGYLKTLDGSPGVYRMLDAQSQVLYVGKARNLRARVSNYARPSGHSGRIARMIRETASMMFLTTRTETEALLLEQNLIKQLKPRYNVLLRDDKSFPNILIAKDHPFPMLKKHRGKKSEKGSYFGPFASAGAVNRTLNQLQRVFLLRTCSDATFESRTRPCLLFQIKRCSAPCVGRVPAEDYAELIGDAERFLQGRTTKVQANLAEQMQAASEAMEFERAAALRDRIKALTQVQSSQGINPRGVAEADVIAVHLEGGQACVQVFFIRANQSWGNRDFFPRTGAGAEEPEILEAFLAQFYDDKEPPRMILLSHPVDNPDLVGQLLSERAGRKVTLGVPQRGEKAELVENAARNARESLARRMAESATQNRLLAGLAEAFELDAAPKRIEVYDNSHIQGTNAVGGMIVAGPEGFLKSQYRKFNIRGAAGAQGDDFGMMKEVLTRRFERLLKEDPERKTDAWPDLLLIDGGAGQVSAVQEILQELGVDDVPFIGVAKGIDRDAGKEEFHRPGEPPFALRMNDPVLYFVQRLRDEAHRWAIGAHRAKRAKAVSATPLDEIPGVGAARKRALLAHFGSAKAVARAGVPDLCAVEGISETMAQSIHDYFHGS.

A GIY-YIG domain is found at 27 to 105; the sequence is GSPGVYRMLD…IKQLKPRYNV (79 aa). Residues 215 to 250 enclose the UVR domain; that stretch reads TKVQANLAEQMQAASEAMEFERAAALRDRIKALTQV.

It belongs to the UvrC family. In terms of assembly, interacts with UvrB in an incision complex.

The protein resides in the cytoplasm. In terms of biological role, the UvrABC repair system catalyzes the recognition and processing of DNA lesions. UvrC both incises the 5' and 3' sides of the lesion. The N-terminal half is responsible for the 3' incision and the C-terminal half is responsible for the 5' incision. The chain is UvrABC system protein C from Cereibacter sphaeroides (strain ATCC 17023 / DSM 158 / JCM 6121 / CCUG 31486 / LMG 2827 / NBRC 12203 / NCIMB 8253 / ATH 2.4.1.) (Rhodobacter sphaeroides).